Reading from the N-terminus, the 338-residue chain is 2-methyl-6-phytyl-1,4-hydroquinone methyltransferase, chloroplastic (338 aa).

A chloroplast-targeting transit peptide spans 1–51; it reads MASLMLNGAITFPKGLGSPGSNLHARSIPRPTLLSVTRTSTPRLSVATRCS. The Chloroplast intermembrane segment spans residues 52–307; the sequence is SSSVSSSRPS…VNNPFSFLGR (256 aa). The interval 114 to 123 is SAM motif I; sequence VVDVGGGTGF. Positions 159–172 are SAM motif II; the sequence is CKIVEGDAEDLPFP. The tract at residues 200 to 213 is SAM motif III; sequence RVLKIGGKACLIGP. The chain crosses the membrane as a helical span at residues 308 to 328; sequence FLLGTLAAAWFVLIPIYMWIK. At 329 to 338 the chain is on the stromal side; that stretch reads DQIVPKDQPI.

It belongs to the class I-like SAM-binding methyltransferase superfamily. MPBQ/MBSQ MT family.

It is found in the plastid. The protein resides in the chloroplast inner membrane. The enzyme catalyses 2-methyl-6-phytyl-1,4-benzene-1,4-diol + S-adenosyl-L-methionine = 2,3-dimethyl-6-phytylbenzene-1,4-diol + S-adenosyl-L-homocysteine + H(+). It catalyses the reaction 2-methyl-6-(all-trans-nonaprenyl)benzene-1,4-diol + S-adenosyl-L-methionine = plastoquinol-9 + S-adenosyl-L-homocysteine + H(+). It carries out the reaction 6-geranylgeranyl-2-methylbenzene-1,4-diol + S-adenosyl-L-methionine = 6-geranylgeranyl-2,3-dimethylbenzene-1,4-diol + S-adenosyl-L-homocysteine + H(+). It functions in the pathway cofactor biosynthesis; tocopherol biosynthesis. In terms of biological role, involved in a key methylation step in both tocopherols (vitamin E) and plastoquinone synthesis. Catalyzes the conversion of 2-methyl-6-phytyl-1,4-hydroquinone (MPBQ) to 2,3-dimethyl-6-phytyl-1,4-hydroquinone (DMPQ, a substrate for tocopherol cyclase), and 2-methyl-6-solanyl-1,4-benzoquinone (MSBQ) to plastoquinone. This Arabidopsis thaliana (Mouse-ear cress) protein is 2-methyl-6-phytyl-1,4-hydroquinone methyltransferase, chloroplastic (VTE3).